A 705-amino-acid chain; its full sequence is Probable glutamate carboxypeptidase AMP1 (705 aa).

The Cytoplasmic segment spans residues 1-24 (MSQPLTTRPTVTGISIIPFRQPPP). Residues 25–42 (LCSFLFVIVLFVATFYTL) traverse the membrane as a helical; Signal-anchor for type II membrane protein segment. At 43 to 705 (HHPDAVTPPL…ASKALKGGFT (663 aa)) the chain is on the extracellular side. Asparagine 74, asparagine 137, and asparagine 322 each carry an N-linked (GlcNAc...) asparagine glycan. The segment at 255 to 548 (GVVGGEKLSL…GIWGLLGILL (294 aa)) is catalytic. Residues histidine 356 and aspartate 366 each coordinate Zn(2+). The active-site Nucleophile is glutamate 403. Zn(2+) is bound by residues glutamate 404, aspartate 432, and histidine 514. Asparagine 676 is a glycosylation site (N-linked (GlcNAc...) asparagine).

Belongs to the peptidase M28 family. M28B subfamily. Requires Zn(2+) as cofactor. Expressed in all plant parts. Highest levels in the bolt stem, inflorescence, root and silique. Low level in leaves.

It is found in the endoplasmic reticulum membrane. The catalysed reaction is Release of an unsubstituted, C-terminal glutamyl residue, typically from Ac-Asp-Glu or folylpoly-gamma-glutamates.. In terms of biological role, may modulate the level of one or more small signaling molecules that have a role in regulating meristem function. May play a role in balancing and restricting the meristem-promoting activity of auxin signaling. Involved in ethylene and giberellin (GA) signaling pathways or in a parallel pathway controlling cell and hypocotyl elongation and cellular organization. Involved in abscisic acid (ABA) signaling pathway. Plays a negative role in ABA-mediated seed germination and seedling development. Acts in association with LAMP1 to suppress ectopic stem cell niche formation in the shoot apical meristem (SAM) independently of cytokinin signaling pathway. Modulates responses to ABA, oxidative stress and abotic stress. Acts as a negative regulator of the ABA signaling pathway to modulate freezing and drought stress responses. Mediates carbon and amino acid metabolism. May be involved in the acquisition and/or maintenance of seed dormancy. Involved in the regulation of response to heat shock and plant defense. This chain is Probable glutamate carboxypeptidase AMP1, found in Arabidopsis thaliana (Mouse-ear cress).